The primary structure comprises 144 residues: MYLNTISPSRGSKHLSKRVGRGIGSGLGKTGGRGHKGQKSRSGGKVRLGFEGGQTPLYRRLPKFGFISRKAMVTQEIRLSDLSRVSDKVIDLNVLKTYNIISRKIKFVKIIMSGEIKRPITIRKLRVSKGARAAIQSIGGQIEE.

Positions 1 to 10 (MYLNTISPSR) are enriched in polar residues. The segment at 1–51 (MYLNTISPSRGSKHLSKRVGRGIGSGLGKTGGRGHKGQKSRSGGKVRLGFE) is disordered. Residues 11 to 20 (GSKHLSKRVG) show a composition bias toward basic residues. The span at 21–31 (RGIGSGLGKTG) shows a compositional bias: gly residues. Over residues 32–44 (GRGHKGQKSRSGG) the composition is skewed to basic residues.

It belongs to the universal ribosomal protein uL15 family. In terms of assembly, part of the 50S ribosomal subunit.

Binds to the 23S rRNA. The chain is Large ribosomal subunit protein uL15 from Blochmanniella pennsylvanica (strain BPEN).